Consider the following 619-residue polypeptide: Long-chain fatty acid transport protein 6 (619 aa).

Transmembrane regions (helical) follow at residues 22-42 and 119-139; these read LLFPYFWDDFWFVLKVVLIII and VHVWFGLAKLGCVVAFLNTNI. 221 to 232 lines the AMP pocket; sequence YIFTSGTTGLPK.

Belongs to the ATP-dependent AMP-binding enzyme family. In terms of tissue distribution, strongly expressed in heart and localizes to cardiac myocytes. Expressed at moderate levels in placenta, testis, and adrenal glands. Expressed at very low levels in kidney, bladder and uterus.

The protein resides in the cell membrane. Its subcellular location is the sarcolemma. The catalysed reaction is a fatty acid(in) = a fatty acid(out). It catalyses the reaction hexadecanoate(out) = hexadecanoate(in). It carries out the reaction (9Z)-octadecenoate(out) = (9Z)-octadecenoate(in). The enzyme catalyses (9Z,12Z)-octadecadienoate(out) = (9Z,12Z)-octadecadienoate(in). The catalysed reaction is a very long-chain fatty acid + ATP + CoA = a very long-chain fatty acyl-CoA + AMP + diphosphate. It catalyses the reaction tetracosanoate + ATP + CoA = tetracosanoyl-CoA + AMP + diphosphate. It carries out the reaction a long-chain fatty acid + ATP + CoA = a long-chain fatty acyl-CoA + AMP + diphosphate. The enzyme catalyses (5Z,8Z,11Z,14Z)-eicosatetraenoate + ATP + CoA = (5Z,8Z,11Z,14Z)-eicosatetraenoyl-CoA + AMP + diphosphate. The catalysed reaction is (9Z)-octadecenoate + ATP + CoA = (9Z)-octadecenoyl-CoA + AMP + diphosphate. Functionally, mediates the import of long-chain fatty acids (LCFA) into the cell by facilitating their transport at the plasma membrane. Also functions as an acyl-CoA ligase catalyzing the ATP-dependent formation of fatty acyl-CoA using LCFA and very-long-chain fatty acids (VLCFA) as substrates. Plays a pivotal role in regulating available LCFA substrates from exogenous sources in tissues undergoing high levels of beta-oxidation such as the heart. This chain is Long-chain fatty acid transport protein 6 (SLC27A6), found in Homo sapiens (Human).